The sequence spans 408 residues: MAVNLQIPSESEILPVAGVEIGVAEAGIRKAGRRDLTVFRLAPGSAVAGVFTRNRFRAAPVQVCEAHLAQGGPIRALVVNTGNANAGTGAPGLKNAQDTCAALGKLLDVPAEQILPFSTGVILEPLPMDRLTAGLPAAVADLRADGWYGAAHGIMTTDTLPKIHSRRVNIGGKTVTITGISKGAGMIRPNMATMLGFLATDAGIAQPLLRQLAIELADVSFNRITVDGDTSTNDSFILIATGQAGVTVDSAGDAAYAALRDALAAAATDLAQKIVRDAEGATKFMTIRVEEAGNTEEALKVAYAVAHSPLVKTAFFASDPNLGRILAAIGYAGIDDLDVSRLRLWLGDVLVAVDGGRNPDYQEADGQRVMKQAEILVRIALGRGQVADTVYTCDFSHEYVTINADYRS.

Substrate-binding residues include threonine 156, lysine 182, threonine 193, glutamate 279, asparagine 403, and serine 408. Threonine 193 serves as the catalytic Nucleophile.

The protein belongs to the ArgJ family. Heterotetramer of two alpha and two beta chains.

Its subcellular location is the cytoplasm. It catalyses the reaction N(2)-acetyl-L-ornithine + L-glutamate = N-acetyl-L-glutamate + L-ornithine. The catalysed reaction is L-glutamate + acetyl-CoA = N-acetyl-L-glutamate + CoA + H(+). Its pathway is amino-acid biosynthesis; L-arginine biosynthesis; L-ornithine and N-acetyl-L-glutamate from L-glutamate and N(2)-acetyl-L-ornithine (cyclic): step 1/1. It participates in amino-acid biosynthesis; L-arginine biosynthesis; N(2)-acetyl-L-ornithine from L-glutamate: step 1/4. Its function is as follows. Catalyzes two activities which are involved in the cyclic version of arginine biosynthesis: the synthesis of N-acetylglutamate from glutamate and acetyl-CoA as the acetyl donor, and of ornithine by transacetylation between N(2)-acetylornithine and glutamate. The protein is Arginine biosynthesis bifunctional protein ArgJ of Bordetella pertussis (strain Tohama I / ATCC BAA-589 / NCTC 13251).